A 513-amino-acid chain; its full sequence is MQLNSTEISELIKKRIAQFDVVSEARNTGTIVSVSDGIIRIHGLSEVMQGEMIALPDNRYAMALNLERDSVGAVVMGPYIDLAEGMEVQCTGRILEVPVGRGLLGRVVNTLGQPIDGKGEIKNDGFSPVEVIAPGVIERKSVDQPVQTGYKAVDSMVPIGRGQRELIIGDRQTGKTALAIDTIINQKDSGIKCIYVAIGQKASTIANVVRKLEENGALANTIIVVASASESAALQYLAPYAGCAMGEYFRDRGEDALIIYDDLSKQAVAYRQISLLLRRPPGREAFPGDVFYLHSRLLERAARVNEEYVENFTKGEVKGKTGSLTALPIIETQAGDVSAFVPTNVISITDGQIFLESNLFNAGVRPAVNPGISVSRVGGAAQTKVVKKLAGGIRTALAQYRELAAFAQFASDLDDATRKQLSHGEKVTEMLKQKQYAPLSVAEQAVLLFAVEFGYLDDVELNKIADFETTLLDYANRTNAEFMRELTQSGDYNDEIKNTLEGILNNFKANNTW.

An ATP-binding site is contributed by 169–176 (GDRQTGKT).

The protein belongs to the ATPase alpha/beta chains family. F-type ATPases have 2 components, CF(1) - the catalytic core - and CF(0) - the membrane proton channel. CF(1) has five subunits: alpha(3), beta(3), gamma(1), delta(1), epsilon(1). CF(0) has three main subunits: a(1), b(2) and c(9-12). The alpha and beta chains form an alternating ring which encloses part of the gamma chain. CF(1) is attached to CF(0) by a central stalk formed by the gamma and epsilon chains, while a peripheral stalk is formed by the delta and b chains.

The protein resides in the cell inner membrane. The enzyme catalyses ATP + H2O + 4 H(+)(in) = ADP + phosphate + 5 H(+)(out). Produces ATP from ADP in the presence of a proton gradient across the membrane. The alpha chain is a regulatory subunit. The chain is ATP synthase subunit alpha from Actinobacillus succinogenes (strain ATCC 55618 / DSM 22257 / CCUG 43843 / 130Z).